Here is a 174-residue protein sequence, read N- to C-terminus: Granulocyte colony-stimulating factor (174 aa).

2 cysteine pairs are disulfide-bonded: C36–C42 and C64–C74. Residue T133 is glycosylated (O-linked (GalNAc...) threonine).

It belongs to the IL-6 superfamily. As to quaternary structure, monomer. In terms of processing, O-glycosylated.

The protein localises to the secreted. Its function is as follows. Granulocyte/macrophage colony-stimulating factors are cytokines that act in hematopoiesis by controlling the production, differentiation, and function of 2 related white cell populations of the blood, the granulocytes and the monocytes-macrophages. This CSF induces granulocytes. The sequence is that of Granulocyte colony-stimulating factor (CSF3) from Ovis aries (Sheep).